Reading from the N-terminus, the 330-residue chain is Putative [LysW]-L-2-aminoadipate/[LysW]-L-glutamate phosphate reductase (330 aa).

Residue 10-13 (SGYI) coordinates NADP(+). Cys142 is a catalytic residue. Asn297 is an NADP(+) binding site.

Belongs to the NAGSA dehydrogenase family. Type 1 subfamily. LysY sub-subfamily.

The protein resides in the cytoplasm. It catalyses the reaction [amino-group carrier protein]-C-terminal-N-(1-carboxy-5-oxopentan-1-yl)-L-glutamine + phosphate + NADP(+) = [amino-group carrier protein]-C-terminal-N-(1-carboxy-5-phosphooxy-5-oxopentan-1-yl)-L-glutamine + NADPH + H(+). It carries out the reaction [amino-group carrier protein]-C-terminal-gamma-(L-glutamyl-5-semialdehyde)-L-glutamate + phosphate + NADP(+) = [amino-group carrier protein]-C-terminal-gamma-(5-phospho-L-glutamyl)-L-glutamate + NADPH + H(+). It functions in the pathway amino-acid biosynthesis; L-lysine biosynthesis via AAA pathway; L-lysine from L-alpha-aminoadipate (Thermus route): step 3/5. It participates in amino-acid biosynthesis; L-arginine biosynthesis. Its function is as follows. Involved in both the arginine and lysine biosynthetic pathways. In Pyrococcus furiosus (strain ATCC 43587 / DSM 3638 / JCM 8422 / Vc1), this protein is Putative [LysW]-L-2-aminoadipate/[LysW]-L-glutamate phosphate reductase.